The sequence spans 168 residues: NADH-quinone oxidoreductase subunit B (168 aa).

The [4Fe-4S] cluster site is built by C49, C50, C114, and C144.

The protein belongs to the complex I 20 kDa subunit family. NDH-1 is composed of 14 different subunits. Subunits NuoB, C, D, E, F, and G constitute the peripheral sector of the complex. It depends on [4Fe-4S] cluster as a cofactor.

The protein localises to the cell membrane. It catalyses the reaction a quinone + NADH + 5 H(+)(in) = a quinol + NAD(+) + 4 H(+)(out). In terms of biological role, NDH-1 shuttles electrons from NADH, via FMN and iron-sulfur (Fe-S) centers, to quinones in the respiratory chain. Couples the redox reaction to proton translocation (for every two electrons transferred, four hydrogen ions are translocated across the cytoplasmic membrane), and thus conserves the redox energy in a proton gradient. This is NADH-quinone oxidoreductase subunit B from Wolbachia sp. subsp. Brugia malayi (strain TRS).